An 872-amino-acid polypeptide reads, in one-letter code: UPF0182 protein Noc_0961 (872 aa).

The next 7 membrane-spanning stretches (helical) occupy residues Phe-8 to Glu-28, Leu-56 to Val-76, Ser-109 to Phe-129, Leu-159 to Leu-179, Trp-207 to Gln-227, Pro-254 to Ile-274, and Thr-282 to Leu-302.

The protein belongs to the UPF0182 family.

The protein localises to the cell membrane. The protein is UPF0182 protein Noc_0961 of Nitrosococcus oceani (strain ATCC 19707 / BCRC 17464 / JCM 30415 / NCIMB 11848 / C-107).